The sequence spans 713 residues: Segment polarity protein dishevelled homolog DVL-3 (713 aa).

A DIX domain is found at 1-82; it reads MGETKVIYHL…RVVCWLVSAD (82 aa). Composition is skewed to polar residues over residues 87–98 and 118–127; these read DAGSVCADNQSD and HPNTRGSQEN. Positions 87-235 are disordered; that stretch reads DAGSVCADNQ…PRIERSSSFS (149 aa). Over residues 140–155 the composition is skewed to basic and acidic residues; that stretch reads AHRERPRRKETPEHAT. A compositionally biased stretch (low complexity) spans 173 to 189; the sequence is ESSSTLMSSELDSTSFF. Polar residues predominate over residues 199–210; the sequence is RFSNSTEQSSAS. Residues 212-225 show a composition bias toward basic residues; the sequence is LMRRHKRRRRKPKA. A PDZ domain is found at 248–333; it reads TVTLNMEKYN…KPGPITLTVA (86 aa). Residues 421–495 form the DEP domain; the sequence is PESGLEVRDR…SEQCYYIFGD (75 aa). Residues 508–518 show a composition bias toward polar residues; that stretch reads HDGSSGTSDQD. Disordered stretches follow at residues 508–527 and 545–652; these read HDGSSGTSDQDTLAPLPHPG and YSPH…GPPG. The span at 564–579 shows a compositional bias: low complexity; sequence GSQHSEGSRSSGSNRS. Basic and acidic residues-rich tracts occupy residues 580–593 and 602–618; these read STEKRKEREAKGGD and ESDHTTRSSVRRERAAS. Over residues 629 to 646 the composition is skewed to basic residues; sequence HRSHHSIAHSIRSHHTHH.

It belongs to the DSH family.

It is found in the cytoplasm. Functionally, involved in the signal transduction pathway mediated by multiple Wnt genes. Required during ciliogenesis for the docking of basal bodies to the apical plasma membrane. This Xenopus tropicalis (Western clawed frog) protein is Segment polarity protein dishevelled homolog DVL-3.